We begin with the raw amino-acid sequence, 477 residues long: Nuclear receptor subfamily 6 group A member 1-A (477 aa).

The segment at residues 40–115 is a DNA-binding region (nuclear receptor); that stretch reads QRSCLICGDR…MGMNRKAIRE (76 aa). 2 NR C4-type zinc fingers span residues 43-63 and 79-98; these read CLIC…CEGC and CSRD…CQYC. The tract at residues 147–187 is disordered; it reads DEANMPEHTWGNNGDSDHSSPGNGVSDGNQPSPVSTLSSNR. The segment covering 156–187 has biased composition (polar residues); that stretch reads WGNNGDSDHSSPGNGVSDGNQPSPVSTLSSNR. An NR LBD domain is found at 230–461; it reads QSHTLIGQLV…HSCKSSLSSY (232 aa).

This sequence belongs to the nuclear hormone receptor family. NR6 subfamily. In terms of assembly, homodimer. In terms of tissue distribution, expressed in germ cells, being predominant in previtellogenic oocytes in the ovary and in spermatocytes in the testis.

The protein resides in the nucleus. Functionally, probable orphan nuclear receptor. Binds to a response element containing repeats of the motif 5'-AGGTCA-3'. This Danio rerio (Zebrafish) protein is Nuclear receptor subfamily 6 group A member 1-A.